The primary structure comprises 249 residues: 3alpha-hydroxy bile acid-CoA-ester 3-dehydrogenase 2 (249 aa).

NAD(+)-binding positions include 15–18, Glu-38, Glu-42, and Asn-92; that span reads TRGI. Ser-144 contacts substrate. Residues Tyr-157 and Lys-161 each act as proton donor/acceptor in the active site. NAD(+) contacts are provided by residues Lys-161 and 190–192; that span reads VNT.

Belongs to the short-chain dehydrogenases/reductases (SDR) family. In terms of assembly, homotetramer.

The catalysed reaction is a 3alpha-hydroxy bile acid CoA + NAD(+) = a 3-oxo bile acid CoA + NADH + H(+). It catalyses the reaction choloyl-CoA + NAD(+) = 7alpha,12alpha-dihydroxy-3-oxochol-24-oyl-CoA + NADH + H(+). It carries out the reaction chenodeoxycholoyl-CoA + NAD(+) = 7alpha-hydroxy-3-oxochol-24-oyl-CoA + NADH + H(+). The enzyme catalyses deoxycholoyl-CoA + NAD(+) = 12alpha-hydroxy-3-oxocholan-24-oyl-CoA + NADH + H(+). The catalysed reaction is lithocholoyl-CoA + NAD(+) = 3-oxocholan-24-oyl-CoA + NADH + H(+). It functions in the pathway lipid metabolism; bile acid biosynthesis. Its function is as follows. Involved in the multi-step bile acid 7alpha-dehydroxylation pathway that transforms primary bile acids to secondary bile acids in the human gut. Catalyzes the oxidation of C3-hydroxyl group of CoA conjugated bile acids generating a C3-oxo bile acid intermediate. Can use choloyl-CoA, chenodeoxycholoyl-CoA, deoxycholoyl-CoA, and lithocholoyl-CoA as substrates with similar efficiency. Highly prefers NAD over NADP as cosubstrate. Also catalyzes the reverse reactions; in vitro, the preferred direction of reaction depends on the pH. Has very little activity with unconjugated (non-CoA) bile acid substrates. This chain is 3alpha-hydroxy bile acid-CoA-ester 3-dehydrogenase 2 (baiA2), found in Clostridium scindens (strain JCM 10418 / VPI 12708).